The following is a 94-amino-acid chain: Small ribosomal subunit protein bS20c (94 aa).

This sequence belongs to the bacterial ribosomal protein bS20 family.

Its subcellular location is the plastid. The protein resides in the chloroplast. Binds directly to 16S ribosomal RNA. The protein is Small ribosomal subunit protein bS20c of Porphyra purpurea (Red seaweed).